The following is a 198-amino-acid chain: ATP-dependent Clp protease proteolytic subunit 2 (198 aa).

Ser94 serves as the catalytic Nucleophile. Residue His119 is part of the active site.

This sequence belongs to the peptidase S14 family. Fourteen ClpP subunits assemble into 2 heptameric rings which stack back to back to give a disk-like structure with a central cavity, resembling the structure of eukaryotic proteasomes.

It is found in the cytoplasm. It catalyses the reaction Hydrolysis of proteins to small peptides in the presence of ATP and magnesium. alpha-casein is the usual test substrate. In the absence of ATP, only oligopeptides shorter than five residues are hydrolyzed (such as succinyl-Leu-Tyr-|-NHMec, and Leu-Tyr-Leu-|-Tyr-Trp, in which cleavage of the -Tyr-|-Leu- and -Tyr-|-Trp bonds also occurs).. Cleaves peptides in various proteins in a process that requires ATP hydrolysis. Has a chymotrypsin-like activity. Plays a major role in the degradation of misfolded proteins. This Borreliella burgdorferi (strain ATCC 35210 / DSM 4680 / CIP 102532 / B31) (Borrelia burgdorferi) protein is ATP-dependent Clp protease proteolytic subunit 2.